A 575-amino-acid polypeptide reads, in one-letter code: Epsin-1 (575 aa).

A 1,2-diacyl-sn-glycero-3-phospho-(1D-myo-inositol-4,5-bisphosphate) is bound by residues Arg-8, Lys-11, Arg-25, Asn-30, Arg-63, and His-73. Residues 12 to 144 (NIVHNYSEAE…RDEDRLREER (133 aa)) form the ENTH domain. The interval 149–186 (KTKEKLAQTATASSAAVGSGPPPEAEQAWPQSSGEEEL) is disordered. Low complexity predominate over residues 157–167 (TATASSAAVGS). UIM domains lie at 183–202 (EEEL…ADQP), 208–227 (EDDV…HDKE), and 233–252 (GDDL…TGGK). Disordered regions lie at residues 264–283 (FTTP…ASVP) and 293–575 (SDPW…PFLL). 8 consecutive repeat copies span residues 274-276 (DPW), 294-296 (DPW), 306-308 (DPW), 319-321 (DPW), 332-334 (DPW), 349-351 (DPW), 367-369 (DPW), and 377-379 (DPW). The interval 274-379 (DPWGGPASVP…APAPAFSDPW (106 aa)) is 8 X 3 AA repeats of D-P-W. Positions 306 to 316 (DPWGGAAPTPA) are enriched in low complexity. Low complexity predominate over residues 333 to 346 (PWGGTPAPAAGEGP). Positions 367-379 (DPWAPAPAFSDPW) are enriched in low complexity. Phosphoserine is present on Ser-382. Residues 401 to 410 (DEFSDFDRLR) carry the [DE]-X(1,2)-F-X-X-[FL]-X-X-X-R motif motif. Phosphoserine is present on residues Ser-418 and Ser-419. Position 420 is a phosphothreonine (Thr-420). Phosphoserine is present on residues Ser-434, Ser-446, and Ser-453. The span at 453–467 (SPPPAATPTPTPPTR) shows a compositional bias: pro residues. Residues Thr-459, Thr-463, and Thr-469 each carry the phosphothreonine modification. The residue at position 472 (Ser-472) is a Phosphoserine. The residue at position 493 (Thr-493) is a Phosphothreonine. Repeat copies occupy residues 501–503 (NPF) and 517–519 (NPF). The tract at residues 501–573 (NPFLPSGAPA…GPPAPNTNPF (73 aa)) is 3 X 3 AA repeats of N-P-F. Residue Arg-533 is modified to Omega-N-methylarginine. Over residues 556–569 (GLPPMMPPGPPAPN) the composition is skewed to pro residues. Repeat unit 3 spans residues 571 to 573 (NPF).

It belongs to the epsin family. As to quaternary structure, monomer. Binds ITSN1. Binds clathrin, ZBTB16/ZNF145, AP2A1 and AP2A2. Binds ubiquitinated proteins. Interacts with RALBP1 in a complex also containing NUMB and TFAP2A during interphase and mitosis. Interacts with AP2B1. Interacts with UBQLN2. Interacts with REPS2; the interaction is direct. Interacts with EPS15; the interaction is direct. Interacts with ENTREP1. Post-translationally, ubiquitinated. In terms of processing, phosphorylated on serine and/or threonine residues in mitotic cells. Phosphorylation reduces interaction with REPS2, AP-2 and the membrane fraction. Depolarization of synaptosomes results in dephosphorylation. As to expression, ubiquitously expressed. Detected in liver, spleen and testis, and weakly in lung and thymus (at protein level).

Its subcellular location is the cytoplasm. The protein resides in the cell membrane. It localises to the nucleus. The protein localises to the membrane. It is found in the clathrin-coated pit. Its function is as follows. Binds to membranes enriched in phosphatidylinositol 4,5-bisphosphate (PtdIns(4,5)P2). Modifies membrane curvature and facilitates the formation of clathrin-coated invaginations. Regulates receptor-mediated endocytosis. This Rattus norvegicus (Rat) protein is Epsin-1 (Epn1).